The primary structure comprises 366 residues: Galactoside alpha-(1,2)-fucosyltransferase 1 (366 aa).

At 1–8 (MWPPSHRQ) the chain is on the cytoplasmic side. The helical; Signal-anchor for type II membrane protein transmembrane segment at 9 to 25 (LCRAFLLVCVFSVISFF) threads the bilayer. Over 26–366 (LHIHQDSFPH…LSPLWTLAKP (341 aa)) the chain is Lumenal. N-linked (GlcNAc...) asparagine glycans are attached at residues Asn-66, Asn-302, and Asn-328.

It belongs to the glycosyltransferase 11 family.

It is found in the golgi apparatus. It localises to the golgi stack membrane. It carries out the reaction a beta-D-galactosyl-(1-&gt;4)-N-acetyl-beta-D-glucosaminyl derivative + GDP-beta-L-fucose = an alpha-L-Fuc-(1-&gt;2)-beta-D-Gal-(1-&gt;4)-beta-D-GlcNAc derivative + GDP + H(+). The catalysed reaction is a ganglioside GA1 + GDP-beta-L-fucose = a ganglioside Fuc-GA1 + GDP + H(+). The enzyme catalyses a beta-D-Gal-(1-&gt;3)-beta-D-GlcNAc-(1-&gt;3)-beta-D-Gal-(1-&gt;4)-beta-D-Glc-(1&lt;-&gt;1')-Cer(d18:1(4E)) + GDP-beta-L-fucose = alpha-L-fucosyl-(1-&gt;2)- beta-D-galactosyl-(1-&gt;3)-N-acetyl-beta-D-glucosaminyl-(1-&gt;3)-beta-D-galactosyl-(1-&gt;4)-beta-D-glucosyl-(1&lt;-&gt;1')-N-acylsphing-4-enine + GDP + H(+). It catalyses the reaction a neolactoside nLc4Cer(d18:1(4E)) + GDP-beta-L-fucose = a neolactoside IV(2)-alpha-Fuc-nLc4Cer(d18:1(4E)) + GDP + H(+). It carries out the reaction a ganglioside GM1 + GDP-beta-L-fucose = a ganglioside Fuc-GM1 + GDP + H(+). The catalysed reaction is beta-D-galactosyl-(1-&gt;3)-N-acetyl-D-galactosamine + GDP-beta-L-fucose = alpha-L-fucosyl-(1-&gt;2)-beta-D-galactosyl-(1-&gt;3)-N-acetyl-D-galactosamine + GDP + H(+). Its pathway is protein modification; protein glycosylation. In terms of biological role, catalyzes the transfer of L-fucose, from a guanosine diphosphate-beta-L-fucose, to the terminal galactose residue of glycoconjugates through an alpha(1,2) linkage leading to H antigen synthesis that is an intermediate substrate in the synthesis of ABO blood group antigens. H antigen is essential for maturation of the glomerular layer of the main olfactory bulb, in cell migration and early cell-cell contacts during tumor associated angiogenesis. Preferentially fucosylates soluble lactose and to a lesser extent fucosylates glycolipids gangliosides GA1 and GM1a. The protein is Galactoside alpha-(1,2)-fucosyltransferase 1 of Gorilla gorilla gorilla (Western lowland gorilla).